Reading from the N-terminus, the 433-residue chain is Enolase (433 aa).

Residue Gln-166 coordinates (2R)-2-phosphoglycerate. Glu-208 functions as the Proton donor in the catalytic mechanism. Mg(2+)-binding residues include Asp-245, Glu-289, and Asp-316. Residues Lys-341, Arg-370, Ser-371, and Lys-392 each coordinate (2R)-2-phosphoglycerate. Lys-341 (proton acceptor) is an active-site residue.

The protein belongs to the enolase family. Mg(2+) is required as a cofactor.

It is found in the cytoplasm. The protein resides in the secreted. It localises to the cell surface. It carries out the reaction (2R)-2-phosphoglycerate = phosphoenolpyruvate + H2O. Its pathway is carbohydrate degradation; glycolysis; pyruvate from D-glyceraldehyde 3-phosphate: step 4/5. Its function is as follows. Catalyzes the reversible conversion of 2-phosphoglycerate (2-PG) into phosphoenolpyruvate (PEP). It is essential for the degradation of carbohydrates via glycolysis. The chain is Enolase from Acetivibrio thermocellus (strain ATCC 27405 / DSM 1237 / JCM 9322 / NBRC 103400 / NCIMB 10682 / NRRL B-4536 / VPI 7372) (Clostridium thermocellum).